The following is a 224-amino-acid chain: LexA repressor (224 aa).

The H-T-H motif DNA-binding region spans 31–51; the sequence is RAEIANTLGFKSANAAEEHLQ. Residues Ser-142 and Lys-179 each act as for autocatalytic cleavage activity in the active site.

Belongs to the peptidase S24 family. Homodimer.

The catalysed reaction is Hydrolysis of Ala-|-Gly bond in repressor LexA.. Represses a number of genes involved in the response to DNA damage (SOS response), including recA and lexA. In the presence of single-stranded DNA, RecA interacts with LexA causing an autocatalytic cleavage which disrupts the DNA-binding part of LexA, leading to derepression of the SOS regulon and eventually DNA repair. The chain is LexA repressor from Delftia acidovorans (strain DSM 14801 / SPH-1).